We begin with the raw amino-acid sequence, 311 residues long: HPr kinase/phosphorylase (311 aa).

Catalysis depends on residues His138 and Lys159. An ATP-binding site is contributed by 153–160; sequence GSSGIGKS. Position 160 (Ser160) interacts with Mg(2+). Asp177 functions as the Proton acceptor; for phosphorylation activity. Proton donor; for dephosphorylation activity in the catalytic mechanism. The important for the catalytic mechanism of both phosphorylation and dephosphorylation stretch occupies residues 201–210; that stretch reads LEIRGVGIIN. Glu202 provides a ligand contact to Mg(2+). Arg243 is an active-site residue. The segment at 264 to 269 is important for the catalytic mechanism of dephosphorylation; the sequence is PVRPGR.

This sequence belongs to the HPrK/P family. In terms of assembly, homohexamer. It depends on Mg(2+) as a cofactor.

It carries out the reaction [HPr protein]-L-serine + ATP = [HPr protein]-O-phospho-L-serine + ADP + H(+). The catalysed reaction is [HPr protein]-O-phospho-L-serine + phosphate + H(+) = [HPr protein]-L-serine + diphosphate. Its function is as follows. Catalyzes the ATP- as well as the pyrophosphate-dependent phosphorylation of a specific serine residue in HPr, a phosphocarrier protein of the phosphoenolpyruvate-dependent sugar phosphotransferase system (PTS). HprK/P also catalyzes the pyrophosphate-producing, inorganic phosphate-dependent dephosphorylation (phosphorolysis) of seryl-phosphorylated HPr (P-Ser-HPr). The two antagonistic activities of HprK/P are regulated by several intracellular metabolites, which change their concentration in response to the absence or presence of rapidly metabolisable carbon sources (glucose, fructose, etc.) in the growth medium. Therefore, by controlling the phosphorylation state of HPr, HPrK/P is a sensor enzyme that plays a major role in the regulation of carbon metabolism and sugar transport: it mediates carbon catabolite repression (CCR), and regulates PTS-catalyzed carbohydrate uptake and inducer exclusion. The sequence is that of HPr kinase/phosphorylase from Brevibacillus brevis (strain 47 / JCM 6285 / NBRC 100599).